The primary structure comprises 502 residues: Cytochrome P450 3A40 (502 aa).

Residue Cys-443 coordinates heme.

It belongs to the cytochrome P450 family. It depends on heme as a cofactor.

The protein resides in the endoplasmic reticulum membrane. The protein localises to the microsome membrane. The enzyme catalyses an organic molecule + reduced [NADPH--hemoprotein reductase] + O2 = an alcohol + oxidized [NADPH--hemoprotein reductase] + H2O + H(+). This chain is Cytochrome P450 3A40 (cyp3a40), found in Oryzias latipes (Japanese rice fish).